Here is a 303-residue protein sequence, read N- to C-terminus: Hemolysin E (303 aa).

Cys87 and Cys285 are oxidised to a cystine. A helical membrane pass occupies residues Ala179–Ala199.

The protein belongs to the hemolysin E family. In terms of assembly, monomer and oligomer. In periplasm, it is present as a monomer, while in outer membrane vesicles, it oligomerizes to form a pore structure that is active. The pore is formed by a dodecamer. In periplasm, it forms a disulfide bond, which prevents the oligomerization. In outer membrane vesicles, the redox status prevents formation of the disulfide bond, leading to oligomerization and pore formation.

The protein resides in the secreted. It is found in the periplasm. The protein localises to the host cell membrane. Its function is as follows. Toxin, which has some hemolytic activity towards mammalian cells. Acts by forming a pore-like structure upon contact with mammalian cells. The sequence is that of Hemolysin E (hlyE) from Salmonella paratyphi A (strain ATCC 9150 / SARB42).